Reading from the N-terminus, the 200-residue chain is UPF0301 protein BruAb1_0502 (200 aa).

Belongs to the UPF0301 (AlgH) family.

The sequence is that of UPF0301 protein BruAb1_0502 from Brucella abortus biovar 1 (strain 9-941).